A 237-amino-acid polypeptide reads, in one-letter code: D-aminoacyl-tRNA deacylase (237 aa).

Belongs to the DtdA deacylase family. As to quaternary structure, monomer. Requires Zn(2+) as cofactor.

It catalyses the reaction a D-aminoacyl-tRNA + H2O = a tRNA + a D-alpha-amino acid + H(+). The enzyme catalyses glycyl-tRNA(Ala) + H2O = tRNA(Ala) + glycine + H(+). In terms of biological role, D-aminoacyl-tRNA deacylase with broad substrate specificity. By recycling D-aminoacyl-tRNA to D-amino acids and free tRNA molecules, this enzyme counteracts the toxicity associated with the formation of D-aminoacyl-tRNA entities in vivo. In Saccharolobus islandicus (strain Y.N.15.51 / Yellowstone #2) (Sulfolobus islandicus), this protein is D-aminoacyl-tRNA deacylase.